The following is a 2115-amino-acid chain: Nuclear mitotic apparatus protein 1 (2115 aa).

The segment at 1 to 212 (MTLHATRGAA…SPMGDILQTP (212 aa)) is head (Globular). At serine 162 the chain carries Phosphoserine. Threonine 163 carries the phosphothreonine modification. Residues serine 169 and serine 203 each carry the phosphoserine modification. Threonine 211 is modified (phosphothreonine). Residues 213–1699 (QFQMRRLKKQ…ADQQLRDLGK (1487 aa)) adopt a coiled-coil conformation. Position 271 is a phosphoserine (serine 271). The residue at position 379 (lysine 379) is an N6-acetyllysine. Phosphoserine occurs at positions 388 and 395. Residues 549 to 560 (LRHQVEQLSSSL) show a composition bias toward low complexity. Disordered stretches follow at residues 549–593 (LRHQ…EERE) and 746–766 (LVEQHKRERKELEEERAGRKG). A compositionally biased stretch (basic and acidic residues) spans 561–581 (KQKEQQLKEVAEKQEATRQDH). A Phosphoserine modification is found at serine 820. Residue lysine 891 is modified to N6-acetyllysine. Basic and acidic residues-rich tracts occupy residues 926-950 (AGEQQETASRELVKEPARAGDRQPE) and 996-1013 (QEERGQQEREVARLTQER). Disordered stretches follow at residues 926–958 (AGEQQETASRELVKEPARAGDRQPEWLEEQQGR) and 988–1013 (LMESQGQQQEERGQQEREVARLTQER). Phosphothreonine; by PLK1 is present on threonine 1047. The span at 1090–1102 (LKEQLAKKEKEHA) shows a compositional bias: basic and acidic residues. Disordered regions lie at residues 1090 to 1225 (LKEQ…RKNS) and 1275 to 1296 (ETASNSARAAERSSALREEVQS). Composition is skewed to low complexity over residues 1103 to 1112 (SGSGAQSEAA) and 1133 to 1142 (EQQCQKQQEQ). Residues 1145 to 1163 (SLERSLEAERASRAERDSA) show a composition bias toward basic and acidic residues. Serine 1187 is modified (phosphoserine). Positions 1198 to 1224 (KVQDHSKAEDEWKAQVARGRQEAERKN) are enriched in basic and acidic residues. Serine 1225 carries the phosphoserine modification. Positions 1283 to 1296 (AAERSSALREEVQS) are enriched in basic and acidic residues. Lysine 1511 is modified (N6-acetyllysine). Serine 1601 is subject to Phosphoserine. A Glycyl lysine isopeptide (Lys-Gly) (interchain with G-Cter in SUMO2) cross-link involves residue lysine 1699. Residues 1699 to 1876 (KFQVATDALK…NSALLSLPGY (178 aa)) form a membrane-binding domain 1 region. The segment at 1700 to 2115 (FQVATDALKS…TPRAKGKAKH (416 aa)) is tail (Globular). Serine 1721, serine 1724, and serine 1728 each carry phosphoserine. The tract at residues 1734-1761 (PLSITSKLPRTQPDGTSVPGEPASPISQ) is disordered. Positions 1735–1748 (LSITSKLPRTQPDG) are enriched in polar residues. Residues 1742–1748 (PRTQPDG) carry the Tankyrase-binding domain motif. A phosphoserine mark is found at serine 1757 and serine 1760. Lysine 1766 is covalently cross-linked (Glycyl lysine isopeptide (Lys-Gly) (interchain with G-Cter in SUMO1); alternate). Lysine 1766 participates in a covalent cross-link: Glycyl lysine isopeptide (Lys-Gly) (interchain with G-Cter in SUMO2); alternate. Residues serine 1769 and serine 1772 each carry the phosphoserine; by PLK1 modification. Tyrosine 1774 is modified (phosphotyrosine). At threonine 1776 the chain carries Phosphothreonine. Serine 1788 is subject to Phosphoserine. A 4.1-binding domain region spans residues 1788–1810 (SSLDSLGDVFLDSGRKTRSARRR). Serine 1789 bears the Phosphoserine; by PLK1 mark. 2 positions are modified to phosphoserine: serine 1792 and serine 1800. At threonine 1804 the chain carries Phosphothreonine. Residue lysine 1822 forms a Glycyl lysine isopeptide (Lys-Gly) (interchain with G-Cter in SUMO2) linkage. 2 disordered regions span residues 1826 to 1901 (EEPD…GRNS) and 1955 to 2115 (EMKT…KAKH). Phosphoserine is present on residues serine 1830 and serine 1833. Over residues 1830-1857 (SANSSFYSTRSAPASQASLRATSSTQSL) the composition is skewed to polar residues. The residue at position 1834 (serine 1834) is a Phosphoserine; by PLK1. Tyrosine 1836 is subject to Phosphotyrosine. Serine 1840 bears the Phosphoserine mark. Serine 1844 carries the post-translational modification Phosphoserine; alternate. An O-linked (GlcNAc) serine; alternate glycan is attached at serine 1844. Residues serine 1862 and serine 1887 each carry the phosphoserine modification. The span at 1879–1891 (TTRSSARRSQAGV) shows a compositional bias: polar residues. The interval 1882–1985 (SSARRSQAGV…AEGTGITTRQ (104 aa)) is tubulin-binding domain. Residues 1892 to 1926 (SSGAPPGRNSFYMGTCQDEPEQLDDWNRIAELQQR) form a GPSM2-binding domain region. Basic and acidic residues predominate over residues 1955-1966 (EMKTGDPQETLR). Serine 1969 bears the Phosphoserine mark. The tract at residues 1981 to 2060 (ITTRQQRKRV…SILNTPKKLG (80 aa)) is membrane-binding domain 2. The Nuclear localization signal signature appears at 1984–1989 (RQQRKR). At serine 1991 the chain carries Phosphoserine. The residue at position 2000 (threonine 2000) is a Phosphothreonine. Serine 2003 carries the phosphoserine modification. The residue at position 2015 (threonine 2015) is a Phosphothreonine; by CDK1. The segment covering 2015–2032 (TPRDRHEGRKQSTTEAQK) has biased composition (basic and acidic residues). At serine 2047 the chain carries Phosphoserine. Residue threonine 2055 is modified to Phosphothreonine; by CDK1. Residues serine 2062 and serine 2077 each carry the phosphoserine modification. Serine 2087 carries the phosphoserine; by CDK1 modification. The span at 2089–2108 (RIATTTASAATAAAIGATPR) shows a compositional bias: low complexity. Threonine 2106 is subject to Phosphothreonine; by CDK1.

In terms of assembly, homodimer. Also forms multiarm oligomers by association of C-terminal tail domains, oligomers may further assemble to form a hexagonal nuclear lattice-like network. Associates with the dynein-dynactin complex; this association promotes the transport and accumulation of NUMA1 at the mitotic spindle poles that is inhibited by the BRISC complex in a PLK1-dependent manner. Part of a spindle orientation complex at least composed of GNAI1, GPSM2 and NUMA1. Interacts (via C-terminus) with microtubules (MTs); this interaction is direct and promotes both MT bundle formation and stability in a dynein-dynactin complex- and CDK1-independent manner. Interacts with EPB41 and EPB41L2; these interactions are negatively regulated by CDK1 during metaphase and are important for anaphase-specific localization of NUMA1 in symmetrically dividing cells. Interacts (via C-terminus) with GPSM2 (via TPR repeats); this interaction is direct, prevented by competitive binding of INSC, is inhibited in a PLK1-dependent manner, blocks the association of NUMA1 with MTs and inhibits NUMA1-induced MT bundle formation, prevents the association of NUMA1 with SPAG5, induces mitotic spindle pole localization of GPSM2, both metaphase cell cortex localization of NUMA1 and mitotic spindle organization. Does not interact with GPSM2 during anaphase. Interacts (via C-terminus) with the nuclear importin alpha/importin beta receptor; this interaction is inhibited by RanGTP. Interacts (via C-terminus) with KPNB1; this interaction is inhibited by RanGTP and the BRISC complex. Interacts with ABRAXAS2 and the BRISC complex; these interactions regulate mitotic spindle assembly. Interacts (via N-terminal end of the coiled-coil domain) with RAE1; this interaction promotes mitotic spindle formation. Interacts (via C-terminus) with SPAG5 (via C-terminus); this interaction promotes the recruitment of SPAG5 to the MTs at spindle poles in a dynein-dynactin-dependent manner and regulates mitotic spindle organization and proper chromosome alignment during mitosis. Interacts with TNKS; this interaction occurs at the onset of mitosis. Interacts with TNKS2. Interacts with tubulin. Interacts with KHDC3L (via C-terminus). Post-translationally, phosphorylation and dephosphorylation on Thr-2055 regulates the extent of cortical NUMA1 and the dynein-dynactin complex localization during mitotic metaphase and anaphase. In metaphase, phosphorylation on Thr-2055 occurs in a kinase CDK1-dependent manner; this phosphorylation maintains low levels of cortical dynein-dynactin complex at metaphase, and hence proper spindle positioning. In anaphase, dephosphorylated on Thr-2055 by phosphatase PPP2CA; this dephosphorylation stimulates its membrane association and with the dynein-dynactin complex its enrichment at the cell cortex, and hence robust spindle elongation. Probably also phosphorylated on Thr-2015 and Ser-2087 by CDK1; these phosphorylations may regulate its cell cortex recruitment during metaphase and anaphase. Phosphorylated on Thr-1047, Ser-1769, Ser-1772, Ser-1789 and Ser-1834 by PLK1; these phosphorylations induce cortical dynein-dynactin complex dissociation from the NUMA1-GPSM2 complex and negatively regulates cortical dynein-dynactin complex localization. ADP-ribosylated by TNKS at the onset of mitosis; ADP-ribosylation is not required for its localization to spindle poles. In terms of processing, O-glycosylated during cytokinesis at sites identical or close to phosphorylation sites, this interferes with the phosphorylation status. Post-translationally, ubiquitinated with 'Lys-63'-linked polyubiquitin chains. Deubiquitination by the BRISC complex is important for the incorporation of NUMA1 into mitotic spindle poles and normal spindle pole function, probably by modulating interactions between NUMA1, dynein-dynactin complex and importin-beta.

The protein localises to the nucleus. The protein resides in the nucleoplasm. It is found in the nucleus matrix. It localises to the chromosome. Its subcellular location is the cytoplasm. The protein localises to the cytoskeleton. The protein resides in the microtubule organizing center. It is found in the centrosome. It localises to the spindle pole. Its subcellular location is the cell cortex. The protein localises to the cell membrane. The protein resides in the lateral cell membrane. It is found in the cytosol. In terms of biological role, microtubule (MT)-binding protein that plays a role in the formation and maintenance of the spindle poles and the alignement and the segregation of chromosomes during mitotic cell division. Functions to tether the minus ends of MTs at the spindle poles, which is critical for the establishment and maintenance of the spindle poles. Plays a role in the establishment of the mitotic spindle orientation during metaphase and elongation during anaphase in a dynein-dynactin-dependent manner. In metaphase, part of a ternary complex composed of GPSM2 and G(i) alpha proteins, that regulates the recruitment and anchorage of the dynein-dynactin complex in the mitotic cell cortex regions situated above the two spindle poles, and hence regulates the correct oritentation of the mitotic spindle. During anaphase, mediates the recruitment and accumulation of the dynein-dynactin complex at the cell membrane of the polar cortical region through direct association with phosphatidylinositol 4,5-bisphosphate (PI(4,5)P2), and hence participates in the regulation of the spindle elongation and chromosome segregation. Also binds to other polyanionic phosphoinositides, such as phosphatidylinositol 3-phosphate (PIP), lysophosphatidic acid (LPA) and phosphatidylinositol triphosphate (PIP3), in vitro. Also required for proper orientation of the mitotic spindle during asymmetric cell divisions. Plays a role in mitotic MT aster assembly. Involved in anastral spindle assembly. Positively regulates TNKS protein localization to spindle poles in mitosis. Highly abundant component of the nuclear matrix where it may serve a non-mitotic structural role, occupies the majority of the nuclear volume. Required for epidermal differentiation and hair follicle morphogenesis. In Homo sapiens (Human), this protein is Nuclear mitotic apparatus protein 1.